An 884-amino-acid chain; its full sequence is Probable ribonuclease ZC3H12C (884 aa).

Residues 66 to 108 (KPTMDTVNSGKEGKGVSEENVSSGDSEGSTSSDHESEQLSSLS) form a disordered region. The segment covering 87–96 (SSGDSEGSTS) has biased composition (low complexity). Serine 231 bears the Phosphoserine mark. Positions 246 to 401 (LRPVVIDGSN…LGRHGPSLDN (156 aa)) constitute an RNase NYN domain. The C3H1-type zinc-finger motif lies at 411–436 (EHKKQPCPYGKKCTYGHKCKYYHPER). The span at 456–478 (AAKTTNEGGLVKSNSVPCSTKAD) shows a compositional bias: polar residues. Disordered stretches follow at residues 456–548 (AAKT…SGVH), 716–739 (VGARSSCPGDYPSPPSSAHSKAPH), and 755–776 (SRLYDSSPSRQRKPYSRQEGLG). The span at 500–516 (VYQDIEEKLPTKNKLET) shows a compositional bias: basic and acidic residues. The segment covering 518–543 (SVPSLVSIPATSTAKPQSTTPLSNGL) has biased composition (polar residues).

It belongs to the ZC3H12 family. It depends on Mg(2+) as a cofactor.

In terms of biological role, may function as RNase and regulate the levels of target RNA species. The sequence is that of Probable ribonuclease ZC3H12C (Zc3h12c) from Mus musculus (Mouse).